Reading from the N-terminus, the 584-residue chain is Acetylcholinesterase (584 aa).

A1 is a signal peptide. A disulfide bridge links C70 with C97. Catalysis depends on S204, which acts as the Acyl-ester intermediate. C258 and C273 are oxidised to a cystine. N266 carries an N-linked (GlcNAc...) asparagine glycan. E335 serves as the catalytic Charge relay system. N-linked (GlcNAc...) asparagine glycosylation occurs at N351. C410 and C530 are disulfide-bonded. H448 serves as the catalytic Charge relay system. The N-linked (GlcNAc...) asparagine glycan is linked to N465.

It belongs to the type-B carboxylesterase/lipase family. As to quaternary structure, homotetramer; composed of disulfide-linked homodimers. Interacts with PRIMA1. The interaction with PRIMA1 is required to anchor it to the basal lamina of cells and organize into tetramers.

Its subcellular location is the synapse. The protein localises to the secreted. It is found in the cell membrane. It catalyses the reaction acetylcholine + H2O = choline + acetate + H(+). In terms of biological role, terminates signal transduction at the neuromuscular junction by rapid hydrolysis of the acetylcholine released into the synaptic cleft. The polypeptide is Acetylcholinesterase (ACHE) (Oryctolagus cuniculus (Rabbit)).